Reading from the N-terminus, the 506-residue chain is RNA-splicing ligase RtcB homolog (506 aa).

The Mn(2+) site is built by Asp120, Cys123, His228, His260, and His354. Residue 227 to 231 (NHYAE) coordinates GMP. Residues 354–355 (HN), 403–406 (GGTM), Ser410, 429–432 (HGAG), and Lys505 contribute to the GMP site. The GMP-histidine intermediate role is filled by His429.

This sequence belongs to the RtcB family. In terms of assembly, catalytic component of the tRNA-splicing ligase complex. Requires Mn(2+) as cofactor.

The enzyme catalyses a 3'-end 3'-phospho-ribonucleotide-RNA + a 5'-end dephospho-ribonucleoside-RNA + GTP = a ribonucleotidyl-ribonucleotide-RNA + GMP + diphosphate. It catalyses the reaction a 3'-end 2',3'-cyclophospho-ribonucleotide-RNA + a 5'-end dephospho-ribonucleoside-RNA + GTP + H2O = a ribonucleotidyl-ribonucleotide-RNA + GMP + diphosphate + H(+). Functionally, catalytic subunit of the tRNA-splicing ligase complex that acts by directly joining spliced tRNA halves to mature-sized tRNAs by incorporating the precursor-derived splice junction phosphate into the mature tRNA as a canonical 3',5'-phosphodiester. May act as an RNA ligase with broad substrate specificity, and may function toward other RNAs. This Plasmodium falciparum (isolate 3D7) protein is RNA-splicing ligase RtcB homolog.